Reading from the N-terminus, the 483-residue chain is Cobyric acid synthase (483 aa).

The GATase cobBQ-type domain occupies 251-438 (ALIVAVPMLP…LHGVFSADRF (188 aa)). C333 serves as the catalytic Nucleophile. H430 is a catalytic residue.

It belongs to the CobB/CobQ family. CobQ subfamily.

The protein operates within cofactor biosynthesis; adenosylcobalamin biosynthesis. Its function is as follows. Catalyzes amidations at positions B, D, E, and G on adenosylcobyrinic A,C-diamide. NH(2) groups are provided by glutamine, and one molecule of ATP is hydrogenolyzed for each amidation. This Brucella canis (strain ATCC 23365 / NCTC 10854 / RM-666) protein is Cobyric acid synthase.